The primary structure comprises 364 residues: Coproporphyrin III ferrochelatase (364 aa).

Residues arginine 29 and tyrosine 118 each coordinate Fe-coproporphyrin III. Histidine 169 and glutamate 250 together coordinate Fe(2+).

The protein belongs to the ferrochelatase family.

The protein resides in the cytoplasm. It carries out the reaction Fe-coproporphyrin III + 2 H(+) = coproporphyrin III + Fe(2+). The protein operates within porphyrin-containing compound metabolism; protoheme biosynthesis. In terms of biological role, involved in coproporphyrin-dependent heme b biosynthesis. Catalyzes the insertion of ferrous iron into coproporphyrin III to form Fe-coproporphyrin III. This is Coproporphyrin III ferrochelatase from Streptococcus pneumoniae (strain ATCC 700669 / Spain 23F-1).